The primary structure comprises 261 residues: Cytochrome c oxidase subunit 3 (261 aa).

At 1–15 (MTHQTHAYHMVNPSP) the chain is on the mitochondrial matrix side. Residues 16–34 (WPLTGALSALLMTSGLIMW) traverse the membrane as a helical segment. Over 35–40 (FHFNST) the chain is Mitochondrial intermembrane. The helical transmembrane segment at 41–66 (TLLMLGLTTNMLTMYQWWRDVVREST) threads the bilayer. Topologically, residues 67–72 (FQGHHT) are mitochondrial matrix. Residues 73–105 (PNVQKGLRYGMILFIISEVLFFTGFFWAFYHSS) traverse the membrane as a helical segment. Residues 106 to 128 (LAPTPELGGCWPPTGIHPLNPLE) lie on the Mitochondrial intermembrane side of the membrane. Residues 129–152 (VPLLNTSVLLASGVSITWAHHSLM) traverse the membrane as a helical segment. Topologically, residues 153 to 155 (EGN) are mitochondrial matrix. A helical membrane pass occupies residues 156–183 (RNHMLQALFITIALGVYFTLLQASEYYE). Over 184–190 (APFTISD) the chain is Mitochondrial intermembrane. Residues 191 to 223 (GVYGSTFFVATGFHGLHVIIGSTFLIVCFFRQL) form a helical membrane-spanning segment. Residues 224–232 (KFHFTSNHH) are Mitochondrial matrix-facing. Residues 233–256 (FGFEAAAWYWHFVDVVWLFLYVSI) form a helical membrane-spanning segment. The Mitochondrial intermembrane segment spans residues 257–261 (YWWGS).

The protein belongs to the cytochrome c oxidase subunit 3 family. Component of the cytochrome c oxidase (complex IV, CIV), a multisubunit enzyme composed of 14 subunits. The complex is composed of a catalytic core of 3 subunits MT-CO1, MT-CO2 and MT-CO3, encoded in the mitochondrial DNA, and 11 supernumerary subunits COX4I, COX5A, COX5B, COX6A, COX6B, COX6C, COX7A, COX7B, COX7C, COX8 and NDUFA4, which are encoded in the nuclear genome. The complex exists as a monomer or a dimer and forms supercomplexes (SCs) in the inner mitochondrial membrane with NADH-ubiquinone oxidoreductase (complex I, CI) and ubiquinol-cytochrome c oxidoreductase (cytochrome b-c1 complex, complex III, CIII), resulting in different assemblies (supercomplex SCI(1)III(2)IV(1) and megacomplex MCI(2)III(2)IV(2)).

The protein localises to the mitochondrion inner membrane. It catalyses the reaction 4 Fe(II)-[cytochrome c] + O2 + 8 H(+)(in) = 4 Fe(III)-[cytochrome c] + 2 H2O + 4 H(+)(out). In terms of biological role, component of the cytochrome c oxidase, the last enzyme in the mitochondrial electron transport chain which drives oxidative phosphorylation. The respiratory chain contains 3 multisubunit complexes succinate dehydrogenase (complex II, CII), ubiquinol-cytochrome c oxidoreductase (cytochrome b-c1 complex, complex III, CIII) and cytochrome c oxidase (complex IV, CIV), that cooperate to transfer electrons derived from NADH and succinate to molecular oxygen, creating an electrochemical gradient over the inner membrane that drives transmembrane transport and the ATP synthase. Cytochrome c oxidase is the component of the respiratory chain that catalyzes the reduction of oxygen to water. Electrons originating from reduced cytochrome c in the intermembrane space (IMS) are transferred via the dinuclear copper A center (CU(A)) of subunit 2 and heme A of subunit 1 to the active site in subunit 1, a binuclear center (BNC) formed by heme A3 and copper B (CU(B)). The BNC reduces molecular oxygen to 2 water molecules using 4 electrons from cytochrome c in the IMS and 4 protons from the mitochondrial matrix. The polypeptide is Cytochrome c oxidase subunit 3 (MT-CO3) (Gazella cuvieri (Cuvier's gazelle)).